A 250-amino-acid chain; its full sequence is DNA polymerase sliding clamp (250 aa).

It belongs to the PCNA family. Homotrimer. The subunits circularize to form a toroid; DNA passes through its center. Replication factor C (RFC) is required to load the toroid on the DNA.

Functionally, sliding clamp subunit that acts as a moving platform for DNA processing. Responsible for tethering the catalytic subunit of DNA polymerase and other proteins to DNA during high-speed replication. This Methanococcus maripaludis (strain C5 / ATCC BAA-1333) protein is DNA polymerase sliding clamp.